A 123-amino-acid chain; its full sequence is Ribosome-binding factor A (123 aa).

Belongs to the RbfA family. In terms of assembly, monomer. Binds 30S ribosomal subunits, but not 50S ribosomal subunits or 70S ribosomes.

It is found in the cytoplasm. One of several proteins that assist in the late maturation steps of the functional core of the 30S ribosomal subunit. Associates with free 30S ribosomal subunits (but not with 30S subunits that are part of 70S ribosomes or polysomes). Required for efficient processing of 16S rRNA. May interact with the 5'-terminal helix region of 16S rRNA. The protein is Ribosome-binding factor A of Geotalea daltonii (strain DSM 22248 / JCM 15807 / FRC-32) (Geobacter daltonii).